Reading from the N-terminus, the 425-residue chain is MKVLLKNARVIKSHQVQKTDVLVENDRITQIQPEINVEAEQIIDVKNQLLMPGLVDIHVHFRDPGQTDKEDVVSGSAAAVKGGFTTVLTMPNVDPVPDTPEKMTAMVKHNQTAGSLHIGQYGSITKKRTSEELVDFKALKEAGAVAFSNDGNGIQTAETMYQAMLQIKEVGLPLAAHVEDESLMQHGVMNQGTVAEKLGLPGISELAETAQLARDLEIARNTGAHYHVCHVSKARSVELIRRAQRDGVHVTAEVAPHHLFLDETMISMDNPMMKMNPPLRTLEDRQALLGGLLDGTIGMIATDHAPHTVKDKAGSMKTASFGITGLETAFPLLYTKLVKPGLCTVEQLVEWMSIQPAEIFNLKAAGQLEVGDVADLTVMNVEDEYEIKEADFASKGINSPFIGQKVYGQTQLTMVAGKIVYQREG.

Positions 58 and 60 each coordinate Zn(2+). Residues His-60–Arg-62 and Asn-92 contribute to the substrate site. Zn(2+) contacts are provided by Asp-150, His-177, and His-230. Asn-276 lines the substrate pocket. Residue Asp-303 coordinates Zn(2+). Asp-303 is an active-site residue. Residues His-307 and Phe-321 to Gly-322 each bind substrate.

This sequence belongs to the metallo-dependent hydrolases superfamily. DHOase family. Class I DHOase subfamily. Requires Zn(2+) as cofactor.

The catalysed reaction is (S)-dihydroorotate + H2O = N-carbamoyl-L-aspartate + H(+). It functions in the pathway pyrimidine metabolism; UMP biosynthesis via de novo pathway; (S)-dihydroorotate from bicarbonate: step 3/3. Catalyzes the reversible cyclization of carbamoyl aspartate to dihydroorotate. The chain is Dihydroorotase from Pediococcus pentosaceus (strain ATCC 25745 / CCUG 21536 / LMG 10740 / 183-1w).